Here is a 349-residue protein sequence, read N- to C-terminus: UDP-3-O-acylglucosamine N-acyltransferase (349 aa).

The active-site Proton acceptor is histidine 240.

It belongs to the transferase hexapeptide repeat family. LpxD subfamily. As to quaternary structure, homotrimer.

The enzyme catalyses a UDP-3-O-[(3R)-3-hydroxyacyl]-alpha-D-glucosamine + a (3R)-hydroxyacyl-[ACP] = a UDP-2-N,3-O-bis[(3R)-3-hydroxyacyl]-alpha-D-glucosamine + holo-[ACP] + H(+). It participates in bacterial outer membrane biogenesis; LPS lipid A biosynthesis. Functionally, catalyzes the N-acylation of UDP-3-O-acylglucosamine using 3-hydroxyacyl-ACP as the acyl donor. Is involved in the biosynthesis of lipid A, a phosphorylated glycolipid that anchors the lipopolysaccharide to the outer membrane of the cell. The sequence is that of UDP-3-O-acylglucosamine N-acyltransferase from Porphyromonas gingivalis (strain ATCC 33277 / DSM 20709 / CIP 103683 / JCM 12257 / NCTC 11834 / 2561).